Here is a 94-residue protein sequence, read N- to C-terminus: Integration host factor subunit beta (94 aa).

Belongs to the bacterial histone-like protein family. As to quaternary structure, heterodimer of an alpha and a beta chain.

This protein is one of the two subunits of integration host factor, a specific DNA-binding protein that functions in genetic recombination as well as in transcriptional and translational control. The polypeptide is Integration host factor subunit beta (Buchnera aphidicola subsp. Acyrthosiphon pisum (strain 5A)).